The sequence spans 91 residues: MARSIKKGPYVEESLLRKADFEGGAGSKKVIKTWSRRSTIIPEFVGYTFAVHNGKKFIPVFVTENMVGHKLGEFAPTRTYYGHGADKKGKR.

The protein belongs to the universal ribosomal protein uS19 family.

Functionally, protein S19 forms a complex with S13 that binds strongly to the 16S ribosomal RNA. The sequence is that of Small ribosomal subunit protein uS19 from Syntrophotalea carbinolica (strain DSM 2380 / NBRC 103641 / GraBd1) (Pelobacter carbinolicus).